The primary structure comprises 2276 residues: Poly [ADP-ribose] polymerase tankyrase (2276 aa).

Basic residues-rich tracts occupy residues 1–15 and 87–98; these read MARR…VKAA and KAVKAPKVKAPS. Disordered regions lie at residues 1 to 20 and 79 to 103; these read MARR…KIDG and SSKT…KGND. ANK repeat units lie at residues 345 to 374, 378 to 407, 411 to 440, 461 to 490, 498 to 527, 531 to 560, 564 to 593, 598 to 627, 675 to 725, 729 to 758, 970 to 999, 1171 to 1200, 1204 to 1233, 1472 to 1501, and 1505 to 1535; these read KNIT…TINI, DNWY…SVTM, QTET…DLEK, SGNS…IVVD, NRLT…LVEG, KKRT…SLTL, SGNT…NILS, WQLY…KDKA, SGQT…KVDV, EDNT…NKRN, KDDV…EMHL, NGNT…HVDL, DGNT…DVTE, GLIP…SLKT, and YGRT…AVVL. A disordered region spans residues 1570 to 1649; sequence VPARVESDEE…STGPKRKKLV (80 aa). 2 stretches are compositionally biased toward acidic residues: residues 1576–1590 and 1612–1622; these read SDEE…ESGE and SDDEDDDDDDS. The stretch at 1662 to 1706 is one ANK 16 repeat; it reads KENNPLHYFIEPLAWENVELLGDLAAANKTAIVQCLIDKRSPNPI. The 102-residue stretch at 1788–1889 folds into the WGR domain; the sequence is GLVSFCDETQ…ANFRDMPKKY (102 aa). The 136-residue stretch at 1910-2045 folds into the PARP alpha-helical domain; the sequence is KNTEKDPIRR…EIETATRLLC (136 aa). Residues 2047–2276 form the PARP catalytic domain; that stretch reads AEFRQDLDRV…VLPKYIVMYK (230 aa).

As to expression, expressed throughout the head and tail, in germ cells and somatic cells.

It localises to the nucleus. Its subcellular location is the chromosome. The enzyme catalyses NAD(+) + (ADP-D-ribosyl)n-acceptor = nicotinamide + (ADP-D-ribosyl)n+1-acceptor + H(+).. The catalysed reaction is L-aspartyl-[protein] + NAD(+) = 4-O-(ADP-D-ribosyl)-L-aspartyl-[protein] + nicotinamide. It catalyses the reaction L-glutamyl-[protein] + NAD(+) = 5-O-(ADP-D-ribosyl)-L-glutamyl-[protein] + nicotinamide. Functionally, poly[ADP-ribose] polymerases modify various nuclear proteins by poly(ADP-ribosyl)ation, a post-translational modification synthesized after DNA damage that appears as an obligatory step in a detection/signaling pathway leading to the reparation of DNA strand breaks and programmed cell death. The polypeptide is Poly [ADP-ribose] polymerase tankyrase (Caenorhabditis elegans).